The primary structure comprises 285 residues: 4-diphosphocytidyl-2-C-methyl-D-erythritol kinase (285 aa).

The active site involves Lys11. 95 to 105 serves as a coordination point for ATP; the sequence is PVAAGIGGGSA. Asp137 is an active-site residue.

It belongs to the GHMP kinase family. IspE subfamily.

It catalyses the reaction 4-CDP-2-C-methyl-D-erythritol + ATP = 4-CDP-2-C-methyl-D-erythritol 2-phosphate + ADP + H(+). Its pathway is isoprenoid biosynthesis; isopentenyl diphosphate biosynthesis via DXP pathway; isopentenyl diphosphate from 1-deoxy-D-xylulose 5-phosphate: step 3/6. Functionally, catalyzes the phosphorylation of the position 2 hydroxy group of 4-diphosphocytidyl-2C-methyl-D-erythritol. The chain is 4-diphosphocytidyl-2-C-methyl-D-erythritol kinase from Paramagnetospirillum magneticum (strain ATCC 700264 / AMB-1) (Magnetospirillum magneticum).